Here is a 209-residue protein sequence, read N- to C-terminus: uncharacterized protein (209 aa).

Residues 39–75 (VSFENFMERYDTMEKNIQDLQNKYEEMANNLVAVMAD) are a coiled coil. The segment at 103–131 (TMKDATSLPPPNPNNEQSVFTNGSPTSGK) is disordered. Positions 116-129 (NNEQSVFTNGSPTS) are enriched in polar residues.

The protein belongs to the asfivirus K205R family.

It localises to the host cytoplasm. Its function is as follows. Induces host endoplasmic reticulum stress and consequently activates autophagy and NF-kappa-B signaling pathway. In turn, may induce autophagy-mediated STING1 degradation and innate immune evasion. This is an uncharacterized protein from Ornithodoros (relapsing fever ticks).